The sequence spans 539 residues: GMP synthase [glutamine-hydrolyzing] (539 aa).

The Glutamine amidotransferase type-1 domain maps to 4 to 202 (KILILDFGSQ…VLDIAGAKPD (199 aa)). The active-site Nucleophile is C81. Residues H176 and E178 contribute to the active site. Residues 203–395 (WIMRDHIEEA…LGLPAEMVYR (193 aa)) form the GMPS ATP-PPase domain. ATP is bound at residue 230–236 (SGGVDSS).

In terms of assembly, homodimer.

The catalysed reaction is XMP + L-glutamine + ATP + H2O = GMP + L-glutamate + AMP + diphosphate + 2 H(+). The protein operates within purine metabolism; GMP biosynthesis; GMP from XMP (L-Gln route): step 1/1. Its function is as follows. Catalyzes the synthesis of GMP from XMP. The chain is GMP synthase [glutamine-hydrolyzing] from Burkholderia pseudomallei (strain 1106a).